A 395-amino-acid chain; its full sequence is Demethylmacrocin O-methyltransferase (395 aa).

It carries out the reaction demethylmacrocin + S-adenosyl-L-methionine = macrocin + S-adenosyl-L-homocysteine + H(+). It functions in the pathway antibiotic biosynthesis; tylosin biosynthesis. Its function is as follows. O-methyltransferase that catalyzes the conversion of demethylmacrocin to macrocin, the penultimate step of tylosin antibiotic biosynthesis. Also able to mediate the conversion of demethyllactenocin to lactenocin. The polypeptide is Demethylmacrocin O-methyltransferase (tylE) (Streptomyces fradiae (Streptomyces roseoflavus)).